The primary structure comprises 429 residues: SET domain-containing protein 8 (429 aa).

One can recognise an SET domain in the interval 17 to 232 (KQITIKKIRK…ENEEVTINYG (216 aa)).

This sequence belongs to the class V-like SAM-binding methyltransferase superfamily.

The protein resides in the cytoplasm. It localises to the nucleus. In Schizosaccharomyces pombe (strain 972 / ATCC 24843) (Fission yeast), this protein is SET domain-containing protein 8 (set8).